The chain runs to 254 residues: Pimeloyl-[acyl-carrier protein] methyl ester esterase (254 aa).

The AB hydrolase-1 domain maps to 14-242; the sequence is LVLLHGWGMN…ASHAPFISHP (229 aa). Residues Trp-20, 82-83, and 143-147 each bind substrate; these read SL and FLAIQ. The active-site Nucleophile is Ser-82. Residues Asp-207 and His-235 contribute to the active site. His-235 contributes to the substrate binding site.

This sequence belongs to the AB hydrolase superfamily. Carboxylesterase BioH family. In terms of assembly, monomer.

The protein localises to the cytoplasm. It catalyses the reaction 6-carboxyhexanoyl-[ACP] methyl ester + H2O = 6-carboxyhexanoyl-[ACP] + methanol + H(+). It participates in cofactor biosynthesis; biotin biosynthesis. In terms of biological role, the physiological role of BioH is to remove the methyl group introduced by BioC when the pimeloyl moiety is complete. It allows to synthesize pimeloyl-ACP via the fatty acid synthetic pathway through the hydrolysis of the ester bonds of pimeloyl-ACP esters. This is Pimeloyl-[acyl-carrier protein] methyl ester esterase from Aeromonas salmonicida (strain A449).